We begin with the raw amino-acid sequence, 481 residues long: MITIEQLLDILKKDHNFREVLDSDGYHYHYQGLSFERLSYDSRQVDGKTLFFAKGATFKADYLKEAITNGLQLYISEVDYELGIPVVLVTDIKKAMSLIAMAFYGNPQEKLKLLAFTGTKGKTTAAYFAYHMLKESYKPAMFSTMNTTLDGKTFFKSQLTTPESLDLFAMMAECVTNGMTHLIMEVSSQAYLVDRVYGLTFDVGVFLNISPDHIGPIEHPTFEDYFYHKRLLMENSRAVVINSGMDHFSFLADQVADQEHVFYGPLSDNQITTSQAFSFEAKGQLAGHYDIQLIGHFNQENAMAAGLACLRLGASLADIQKGIAKTRVPGRMEVLTMTNHAKVFVDYAHNGDSLEKLLSVVEEHQTGKLMLILGAPGNKGESRRADFGRVIHQHPNLTVILTADDPNFEDPEDISQEIASHIARPVEIISDREQAIQKAMSLCQEAKDAVIIAGKGADAYQIVKGQQVAYAGDLAIATHYL.

A UDP-N-acetyl-alpha-D-muramoyl-L-alanyl-D-glutamate-binding site is contributed by Ser-42. Gly-118 to Thr-124 is an ATP binding site. Residues Gln-158, Thr-160–Thr-161, Ser-187, and Arg-195 each bind UDP-N-acetyl-alpha-D-muramoyl-L-alanyl-D-glutamate. Lys-229 is modified (N6-carboxylysine). The short motif at Asp-404–Asn-407 is the L-lysine recognition motif element.

Belongs to the MurCDEF family. MurE subfamily. Post-translationally, carboxylation is probably crucial for Mg(2+) binding and, consequently, for the gamma-phosphate positioning of ATP.

It localises to the cytoplasm. It catalyses the reaction UDP-N-acetyl-alpha-D-muramoyl-L-alanyl-D-glutamate + L-lysine + ATP = UDP-N-acetyl-alpha-D-muramoyl-L-alanyl-gamma-D-glutamyl-L-lysine + ADP + phosphate + H(+). It functions in the pathway cell wall biogenesis; peptidoglycan biosynthesis. Catalyzes the addition of L-lysine to the nucleotide precursor UDP-N-acetylmuramoyl-L-alanyl-D-glutamate (UMAG) in the biosynthesis of bacterial cell-wall peptidoglycan. The polypeptide is UDP-N-acetylmuramoyl-L-alanyl-D-glutamate--L-lysine ligase (Streptococcus pyogenes serotype M4 (strain MGAS10750)).